We begin with the raw amino-acid sequence, 562 residues long: Phosphoglucomutase-1 (562 aa).

Met-1 is modified (N-acetylmethionine). At Lys-16 the chain carries N6-acetyllysine. Arg-23 provides a ligand contact to alpha-D-glucose 1,6-bisphosphate. Position 115 is a phosphothreonine (Thr-115). Ser-117 contacts alpha-D-glucose 1,6-bisphosphate. Ser-117 acts as the Phosphoserine intermediate in catalysis. Residue Ser-117 participates in Mg(2+) binding. Residues Ser-117 and Ser-134 each carry the phosphoserine modification. A Phosphothreonine modification is found at Thr-185. Ser-213 bears the Phosphoserine mark. 3 residues coordinate Mg(2+): Asp-288, Asp-290, and Asp-292. Residues Asp-292 and Arg-293 each contribute to the alpha-D-glucose 1,6-bisphosphate site. Lys-349 carries the post-translational modification N6-acetyllysine. Tyr-353 carries the phosphotyrosine modification. Thr-357 is a binding site for alpha-D-glucose 1,6-bisphosphate. The residue at position 369 (Ser-369) is a Phosphoserine. The alpha-D-glucose 1,6-bisphosphate site is built by Glu-376, Ser-378, and Lys-389. A Phosphoserine modification is found at Ser-378. Lys-419 carries the N6-succinyllysine modification. Position 467 is a phosphothreonine; by PAK1 (Thr-467). A phosphoserine mark is found at Ser-485 and Ser-505. Thr-507 carries the phosphothreonine modification. A phosphoserine mark is found at Ser-509 and Ser-541.

It belongs to the phosphohexose mutase family. As to quaternary structure, monomer. Mg(2+) is required as a cofactor. In terms of processing, isoform 2 is the major calmodulin-dependent phosphoprotein in junctional skeletal sarcoplasmic reticulum vesicles. Phosphorylation at Thr-467 by PAK1 significantly enhances enzymatic activity.

Its subcellular location is the cytoplasm. The protein resides in the sarcoplasmic reticulum. The enzyme catalyses alpha-D-glucose 1-phosphate = alpha-D-glucose 6-phosphate. It catalyses the reaction O-phospho-L-seryl-[protein] + alpha-D-glucose 1-phosphate = alpha-D-glucose 1,6-bisphosphate + L-seryl-[protein]. It carries out the reaction alpha-D-glucose 1,6-bisphosphate + L-seryl-[protein] = O-phospho-L-seryl-[protein] + alpha-D-glucose 6-phosphate. Glucose-1,6-bisphosphate enhances phosphorylation of the active site Ser-117, and thereby increases enzyme activity. Its function is as follows. Catalyzes the reversible isomerization of alpha-D-glucose 1-phosphate to alpha-D-glucose 6-phosphate. The mechanism proceeds via the intermediate compound alpha-D-glucose 1,6-bisphosphate. This enzyme participates in both the breakdown and synthesis of glucose. The polypeptide is Phosphoglucomutase-1 (PGM1) (Oryctolagus cuniculus (Rabbit)).